A 40-amino-acid polypeptide reads, in one-letter code: Meleagrin (40 aa).

Q1 bears the Pyrrolidone carboxylic acid mark. 3 disulfides stabilise this stretch: C6–C33, C12–C28, and C16–C32.

The protein belongs to the transferrin family.

This Meleagris gallopavo (Wild turkey) protein is Meleagrin.